We begin with the raw amino-acid sequence, 403 residues long: MSSYLFTSESVSEGHPDKIADQISDAVLDAILAQDKRARVACETMVKTGVAIVAGEVTTSAWIDLEALTRKVILDIGYNSSDVGFDGETCGVLNLIGKQSPDINQGVDRKNPEQQGAGDQGLMFGYATNETDSYMPAAIHLSHRLVEQQAKIRKKKNSALSWLRPDAKSQVTLRYEDGVATAIDAVVLSTHHDPGVKQKDLIEAVREEILKPVLPAKWLHKGTKFHINPTGKFVIGGPVGDCGLTGRKIIVDTYGGWARHGGGAFSGKDPSKVDRSAAYAARYVAKNVVAAGLADRCEVQVSYAIGVAEPTSISVTTFGTGKIADELIEKLIRKHFDLRPFGIIQMLDLIHPMYQQTASYGHFGRKPKDFTYTDGTGAQHSATSFSWEKTDRAEALRAAAKLK.

H15 is an ATP binding site. Residue D17 participates in Mg(2+) binding. E43 is a K(+) binding site. L-methionine contacts are provided by E56 and Q99. The interval 99-109 (QSPDINQGVDR) is flexible loop. ATP contacts are provided by residues 166–168 (DAK), 232–233 (KF), D241, 247–248 (RK), A264, and K268. Position 241 (D241) interacts with L-methionine. Residue K272 coordinates L-methionine.

Belongs to the AdoMet synthase family. In terms of assembly, homotetramer; dimer of dimers. Requires Mg(2+) as cofactor. It depends on K(+) as a cofactor.

It localises to the cytoplasm. The catalysed reaction is L-methionine + ATP + H2O = S-adenosyl-L-methionine + phosphate + diphosphate. It participates in amino-acid biosynthesis; S-adenosyl-L-methionine biosynthesis; S-adenosyl-L-methionine from L-methionine: step 1/1. In terms of biological role, catalyzes the formation of S-adenosylmethionine (AdoMet) from methionine and ATP. The overall synthetic reaction is composed of two sequential steps, AdoMet formation and the subsequent tripolyphosphate hydrolysis which occurs prior to release of AdoMet from the enzyme. The chain is S-adenosylmethionine synthase from Xanthomonas campestris pv. campestris (strain ATCC 33913 / DSM 3586 / NCPPB 528 / LMG 568 / P 25).